Here is an 88-residue protein sequence, read N- to C-terminus: U13-theraphotoxin-Cg1a (88 aa).

Residues 1 to 21 form the signal peptide; that stretch reads MKVSVLITLAVLGVMFVWASA. Residues 22–52 constitute a propeptide that is removed on maturation; the sequence is AELEQSGSDQKDSDSPAWLKSMERIFQSEER. 3 cysteine pairs are disulfide-bonded: cysteine 54–cysteine 68, cysteine 61–cysteine 73, and cysteine 67–cysteine 80.

It belongs to the neurotoxin 10 (Hwtx-1) family. 41 (Jztx-36) subfamily. Expressed by the venom gland.

It localises to the secreted. Functionally, probable ion channel inhibitor. The protein is U13-theraphotoxin-Cg1a of Chilobrachys guangxiensis (Chinese earth tiger tarantula).